A 90-amino-acid polypeptide reads, in one-letter code: Progonadoliberin-3 (90 aa).

The signal sequence occupies residues 1-23 (MEASSRVTVQVLLLALVVQVTLS). A Pyrrolidone carboxylic acid modification is found at glutamine 24. Glycine 33 bears the Glycine amide mark.

This sequence belongs to the GnRH family.

Its subcellular location is the secreted. Functionally, stimulates the secretion of gonadotropins. This Pagrus major (Red sea bream) protein is Progonadoliberin-3 (gnrh3).